A 427-amino-acid chain; its full sequence is Histidinol dehydrogenase (427 aa).

3 residues coordinate NAD(+): Y123, Q185, and N208. Substrate contacts are provided by S231, Q253, and H256. Zn(2+)-binding residues include Q253 and H256. Active-site proton acceptor residues include E321 and H322. Substrate-binding residues include H322, D355, E409, and H414. Position 355 (D355) interacts with Zn(2+). H414 is a Zn(2+) binding site.

This sequence belongs to the histidinol dehydrogenase family. The cofactor is Zn(2+).

The enzyme catalyses L-histidinol + 2 NAD(+) + H2O = L-histidine + 2 NADH + 3 H(+). The protein operates within amino-acid biosynthesis; L-histidine biosynthesis; L-histidine from 5-phospho-alpha-D-ribose 1-diphosphate: step 9/9. Functionally, catalyzes the sequential NAD-dependent oxidations of L-histidinol to L-histidinaldehyde and then to L-histidine. The sequence is that of Histidinol dehydrogenase (hisD) from Bacillus subtilis (strain 168).